The sequence spans 152 residues: Small ribosomal subunit protein uS13 (152 aa).

Ser2 carries the post-translational modification N-acetylserine. Residue Lys91 forms a Glycyl lysine isopeptide (Lys-Gly) (interchain with G-Cter in SUMO2) linkage. N6-acetyllysine; alternate occurs at positions 94 and 106. Residues Lys94 and Lys106 each participate in a glycyl lysine isopeptide (Lys-Gly) (interchain with G-Cter in SUMO2); alternate cross-link.

Belongs to the universal ribosomal protein uS13 family. Component of the small ribosomal subunit.

Its subcellular location is the cytoplasm. In terms of biological role, component of the small ribosomal subunit. The ribosome is a large ribonucleoprotein complex responsible for the synthesis of proteins in the cell. The chain is Small ribosomal subunit protein uS13 (RPS18) from Homo sapiens (Human).